A 20-amino-acid polypeptide reads, in one-letter code: Cicerin (20 aa).

Positions alanine 1–threonine 20 are disordered.

Functionally, has antifungal activity against B.cinerea, F.oxysporum and M.arachidicola. Inhibits cell-free translation in rabbit reticulocyte lysate system. The polypeptide is Cicerin (Cicer arietinum (Chickpea)).